A 23-amino-acid chain; its full sequence is Thymidine phosphorylase (23 aa).

The protein belongs to the thymidine/pyrimidine-nucleoside phosphorylase family. Homodimer.

The enzyme catalyses thymidine + phosphate = 2-deoxy-alpha-D-ribose 1-phosphate + thymine. Its function is as follows. The enzymes which catalyze the reversible phosphorolysis of pyrimidine nucleosides are involved in the degradation of these compounds and in their utilization as carbon and energy sources, or in the rescue of pyrimidine bases for nucleotide synthesis. This is Thymidine phosphorylase (deoA) from Lacticaseibacillus rhamnosus (Lactobacillus rhamnosus).